Consider the following 193-residue polypeptide: Probable GTP-binding protein EngB (193 aa).

The 174-residue stretch at 20-193 (GVPEVAFAGR…ELAHEISRCI (174 aa)) folds into the EngB-type G domain. GTP is bound by residues 28–35 (GRSNVGKS), 55–59 (GSTRQ), 73–76 (DLPG), 140–143 (TKAD), and 171–176 (IMWVSS). Mg(2+)-binding residues include S35 and T57.

The protein belongs to the TRAFAC class TrmE-Era-EngA-EngB-Septin-like GTPase superfamily. EngB GTPase family. Requires Mg(2+) as cofactor.

Necessary for normal cell division and for the maintenance of normal septation. The protein is Probable GTP-binding protein EngB of Anaplasma phagocytophilum (strain HZ).